We begin with the raw amino-acid sequence, 430 residues long: Proteinase-activated receptor 1 (430 aa).

Residues 1–21 (MGPRRLLIVALGLSLCGPLLS) form the signal peptide. A propeptide spans 22 to 41 (SRVPMSQPESERTDATVNPR) (removed for receptor activation). Residues 42–107 (SFFLRNPSEN…SGYLTSPWLT (66 aa)) lie on the Extracellular side of the membrane. 2 N-linked (GlcNAc...) asparagine glycosylation sites follow: Asn67 and Asn80. Residues 108–133 (LFMPSVYTIVFIVSLPLNVLAIAVFV) traverse the membrane as a helical segment. Topologically, residues 134-142 (LRMKVKKPA) are cytoplasmic. Residues 143–162 (VVYMLHLAMADVLFVSVLPF) form a helical membrane-spanning segment. Topologically, residues 163-181 (KISYYFSGTDWQFGSGMCR) are extracellular. The cysteines at positions 180 and 259 are disulfide-linked. The helical transmembrane segment at 182–203 (FATAAFYGNMYASIMLMTVISI) threads the bilayer. Over 204 to 223 (DRFLAVVYPIQSLSWRTLGR) the chain is Cytoplasmic. The helical transmembrane segment at 224–244 (ANFTCVVIWVMAIMGVVPLLL) threads the bilayer. The Extracellular portion of the chain corresponds to 245–273 (KEQTTRVPGLNITTCHDVLSENLMQGFYS). Asn255 carries N-linked (GlcNAc...) asparagine glycosylation. A helical membrane pass occupies residues 274–293 (YYFSAFSAIFFLVPLIVSTV). Over 294-316 (CYTSIIRCLSSSAVANRSKKSRA) the chain is Cytoplasmic. The helical transmembrane segment at 317 to 339 (LFLSAAVFCIFIVCFGPTNVLLI) threads the bilayer. The Extracellular segment spans residues 340-354 (VHYLFLSDSPGTEAA). A helical membrane pass occupies residues 355–379 (YFAYLLCVCVSSVSCCIDPLIYYYA). Residues 380-430 (SSECQRHLYSILCCKESSDPNSCNSTGQLMPSKMDTCSSHLNNSIYKKLLA) are Cytoplasmic-facing. Phosphoserine is present on Ser423.

This sequence belongs to the G-protein coupled receptor 1 family. In terms of processing, proteolytic cleavage by thrombin generates a new N-terminus that functions as a tethered ligand. Also proteolytically cleaved by cathepsin CTSG. Post-translationally, phosphorylated in the C-terminal tail; probably mediating desensitization prior to the uncoupling and internalization of the receptor.

The protein resides in the cell membrane. Functionally, high affinity receptor that binds the activated thrombin, leading to calcium release from intracellular stores. The thrombin-activated receptor signaling pathway is mediated through PTX-insensitive G proteins, activation of phospholipase C resulting in the production of 1D-myo-inositol 1,4,5-trisphosphate (InsP3) which binds to InsP3 receptors causing calcium release from the stores. In astrocytes, the calcium released into the cytosol allows the Ca(2+)-dependent release of L-glutamate into the synaptic cleft through BEST1, that targets the neuronal postsynaptic GRIN2A/NMDAR receptor resulting in the synaptic plasticity regulation. May play a role in platelets activation and in vascular development. Mediates up-regulation of pro-inflammatory cytokines, such as MCP-1/CCL2 and IL6, triggered by coagulation factor Xa (F10) in cardiac fibroblasts and umbilical vein endothelial cells. In Mus musculus (Mouse), this protein is Proteinase-activated receptor 1.